Consider the following 503-residue polypeptide: Lysine--tRNA ligase (503 aa).

Mg(2+) contacts are provided by E413 and E420.

The protein belongs to the class-II aminoacyl-tRNA synthetase family. In terms of assembly, homodimer. Mg(2+) is required as a cofactor.

The protein resides in the cytoplasm. It carries out the reaction tRNA(Lys) + L-lysine + ATP = L-lysyl-tRNA(Lys) + AMP + diphosphate. The protein is Lysine--tRNA ligase of Mannheimia succiniciproducens (strain KCTC 0769BP / MBEL55E).